The primary structure comprises 416 residues: MTYVDTLGQQAKVASRQIAKLSTAAKNDLLNQVAKALVAESDYIITENAKDIANASENGISKIMQDRLLLTEDRIAGIAEGVRQVADLQDPIGQVVRGYTNLDGLKIVQKRVPMGVIAMIFESRPNVSIDAFSLAFKTNNAIILRGGRDAINSNKALVTVARKALKNAGITADAVQFVEDTSHEVAEELMVATKYVDLLIPRGGARLIQTVKEKAKVPVIETGVGNCHIYVDKYANLDMATQIVINAKTQRPSVCNAAESLVVHADIVEEFLPNLEKAISKIQSVEFRADERALKLMEKAVPASPEDFATEFLDYIMSVKVVDSLDEAINWINTYTTSHSEAIVTQDISRAEQFQDDVDAAAVYVNASTRFTDGFVFGLGAEIGISTQKMHARGPMGLEALTSTKFYINGQGQIRE.

The protein belongs to the gamma-glutamyl phosphate reductase family.

The protein localises to the cytoplasm. It carries out the reaction L-glutamate 5-semialdehyde + phosphate + NADP(+) = L-glutamyl 5-phosphate + NADPH + H(+). The protein operates within amino-acid biosynthesis; L-proline biosynthesis; L-glutamate 5-semialdehyde from L-glutamate: step 2/2. In terms of biological role, catalyzes the NADPH-dependent reduction of L-glutamate 5-phosphate into L-glutamate 5-semialdehyde and phosphate. The product spontaneously undergoes cyclization to form 1-pyrroline-5-carboxylate. In Streptococcus thermophilus (strain ATCC BAA-491 / LMD-9), this protein is Gamma-glutamyl phosphate reductase.